The primary structure comprises 278 residues: Envelope glycoprotein L (278 aa).

Residues 1–30 form the signal peptide; that stretch reads MCRRPDCGFSFSPGPVILLWCCLLLPIVSS. Residues 43 to 256 form the gL betaherpesvirus-type domain; that stretch reads VPAECPELTR…DKYYAGLPPE (214 aa). A disulfide bridge links cysteine 154 with cysteine 159.

This sequence belongs to the herpesviridae glycoprotein L (gL) family. Betaherpesvirinae gL subfamily. As to quaternary structure, interacts with glycoprotein H (gH); this interaction is necessary for the correct processing and cell surface expression of gH. Forms the envelope pentamer complex (PC) composed of gH, gL, UL128, UL130, and UL131A. The pentamer interacts with host NRP2. Forms the envelope trimer complex composed of gH, gL, and gO. The trimer interacts with host PDGFRA. The trimer also interacts with host EPHA2.

Its subcellular location is the virion membrane. The protein resides in the host cell membrane. The protein localises to the host Golgi apparatus. It localises to the host trans-Golgi network. Its function is as follows. The heterodimer glycoprotein H-glycoprotein L is required for the fusion of viral and plasma membranes leading to virus entry into the host cell. Acts as a functional inhibitor of gH and maintains gH in an inhibited form. Upon binding to host integrins, gL dissociates from gH leading to activation of the viral fusion glycoproteins gB and gH. In human cytomegalovirus, forms two distincts complexes to mediate viral entry, a trimer and a pentamer at the surface of the virion envelope. The gH-gL-gO trimer is required for infection in fibroblasts by interacting with host PDGFRA, and in glioblastoma cells by interacting with host EPHA2. The gH-gL-UL128-UL130-UL131A pentamer is essential for viral entry in epithelial, endothelial and myeloid cells via interaction with host NRP2. This is Envelope glycoprotein L from Homo sapiens (Human).